A 56-amino-acid chain; its full sequence is Small ribosomal subunit protein uS14A (56 aa).

Residues Cys21 and Cys24 each contribute to the Zn(2+) site. Ser25 carries the post-translational modification Phosphoserine. Positions 39 and 42 each coordinate Zn(2+).

Belongs to the universal ribosomal protein uS14 family. In terms of assembly, component of the small ribosomal subunit (SSU). Mature yeast ribosomes consist of a small (40S) and a large (60S) subunit. The 40S small subunit contains 1 molecule of ribosomal RNA (18S rRNA) and 33 different proteins (encoded by 57 genes). The large 60S subunit contains 3 rRNA molecules (25S, 5.8S and 5S rRNA) and 46 different proteins (encoded by 81 genes). Zn(2+) is required as a cofactor.

Its subcellular location is the cytoplasm. Its function is as follows. Component of the ribosome, a large ribonucleoprotein complex responsible for the synthesis of proteins in the cell. The small ribosomal subunit (SSU) binds messenger RNAs (mRNAs) and translates the encoded message by selecting cognate aminoacyl-transfer RNA (tRNA) molecules. The large subunit (LSU) contains the ribosomal catalytic site termed the peptidyl transferase center (PTC), which catalyzes the formation of peptide bonds, thereby polymerizing the amino acids delivered by tRNAs into a polypeptide chain. The nascent polypeptides leave the ribosome through a tunnel in the LSU and interact with protein factors that function in enzymatic processing, targeting, and the membrane insertion of nascent chains at the exit of the ribosomal tunnel. The chain is Small ribosomal subunit protein uS14A from Saccharomyces cerevisiae (strain ATCC 204508 / S288c) (Baker's yeast).